Reading from the N-terminus, the 1199-residue chain is DNA-directed RNA polymerase subunit beta' (1199 aa).

4 residues coordinate Zn(2+): cysteine 60, cysteine 62, cysteine 75, and cysteine 78. The Mg(2+) site is built by aspartate 449, aspartate 451, and aspartate 453. Cysteine 818, cysteine 892, cysteine 899, and cysteine 902 together coordinate Zn(2+).

Belongs to the RNA polymerase beta' chain family. As to quaternary structure, the RNAP catalytic core consists of 2 alpha, 1 beta, 1 beta' and 1 omega subunit. When a sigma factor is associated with the core the holoenzyme is formed, which can initiate transcription. Mg(2+) is required as a cofactor. Zn(2+) serves as cofactor.

It catalyses the reaction RNA(n) + a ribonucleoside 5'-triphosphate = RNA(n+1) + diphosphate. Its function is as follows. DNA-dependent RNA polymerase catalyzes the transcription of DNA into RNA using the four ribonucleoside triphosphates as substrates. The sequence is that of DNA-directed RNA polymerase subunit beta' from Geobacillus kaustophilus (strain HTA426).